A 309-amino-acid polypeptide reads, in one-letter code: Large ribosomal subunit protein mL45 (309 aa).

It belongs to the mitochondrion-specific ribosomal protein mL45 family. In terms of assembly, component of the mitochondrial ribosome large subunit (39S) which comprises a 16S rRNA and about 50 distinct proteins.

The protein localises to the mitochondrion. Functionally, component of the mitochondrial large ribosomal subunit (mt-LSU). Within the mitochondrial ribosomes, required to direct the nascent polypeptide toward the tunnel exit and position the exit at a distance from the membrane surface. The sequence is that of Large ribosomal subunit protein mL45 (mrpl45) from Xenopus laevis (African clawed frog).